Reading from the N-terminus, the 620-residue chain is Chaperone protein HscA homolog (620 aa).

This sequence belongs to the heat shock protein 70 family.

Its function is as follows. Chaperone involved in the maturation of iron-sulfur cluster-containing proteins. Has a low intrinsic ATPase activity which is markedly stimulated by HscB. In Janthinobacterium sp. (strain Marseille) (Minibacterium massiliensis), this protein is Chaperone protein HscA homolog.